Here is a 410-residue protein sequence, read N- to C-terminus: Toluene 1,2-dioxygenase system ferredoxin--NAD(+) reductase component (410 aa).

His-4–Asp-35 provides a ligand contact to FAD. Arg-145 to Glu-173 is an NAD(+) binding site.

Belongs to the bacterial ring-hydroxylating dioxygenase ferredoxin reductase family. This dioxygenase system consists of four proteins: the two subunits of the hydroxylase component (todC1 and todC2), a ferredoxin (TodB) and a ferredoxin reductase (TodA). FAD is required as a cofactor.

The enzyme catalyses 2 reduced [2Fe-2S]-[ferredoxin] + NAD(+) + H(+) = 2 oxidized [2Fe-2S]-[ferredoxin] + NADH. It participates in xenobiotic degradation; toluene degradation. Its function is as follows. Part of the electron transfer component of toluene 1,2-dioxygenase, transfers electrons from ferredoxin (TodB) to NADH. This chain is Toluene 1,2-dioxygenase system ferredoxin--NAD(+) reductase component (todA), found in Pseudomonas putida (strain ATCC 700007 / DSM 6899 / JCM 31910 / BCRC 17059 / LMG 24140 / F1).